Reading from the N-terminus, the 160-residue chain is Transcriptional repressor NrdR (160 aa).

The segment covering 1 to 11 has biased composition (polar residues); sequence MRCPNCNSLDT. The segment at 1-20 is disordered; it reads MRCPNCNSLDTQVKDSRPTE. A zinc finger lies at 3–34; it reads CPNCNSLDTQVKDSRPTEDSSVIRRRRVCIAC. The ATP-cone domain maps to 49-139; sequence LIVIKRNGRR…VYRNFREAKD (91 aa).

It belongs to the NrdR family. Requires Zn(2+) as cofactor.

In terms of biological role, negatively regulates transcription of bacterial ribonucleotide reductase nrd genes and operons by binding to NrdR-boxes. The protein is Transcriptional repressor NrdR of Rhodopseudomonas palustris (strain ATCC BAA-98 / CGA009).